Here is a 294-residue protein sequence, read N- to C-terminus: uncharacterized protein (294 aa).

This is an uncharacterized protein from Bacillus subtilis (strain 168).